A 421-amino-acid polypeptide reads, in one-letter code: Testin (421 aa).

Residues 92–199 (MILTNPVAAK…GDVKLPCEMD (108 aa)) form the PET domain. 3 consecutive LIM zinc-binding domains span residues 234 to 297 (YSCY…CDSE), 299 to 359 (PRCA…NHAV), and 362 to 421 (QGCH…KRMS).

This sequence belongs to the prickle / espinas / testin family. As to quaternary structure, interacts via LIM domain 1 with ZYX. Interacts (via LIM domain 3) with ENAH and VASP. Interacts with ALKBH4, talin, actin, alpha-actinin, GRIP1 and PXN. Interacts (via LIM domain 2) with ACTL7A (via N-terminus). Heterodimer with ACTL7A; the heterodimer interacts with ENAH to form a heterotrimer.

Its subcellular location is the cytoplasm. It localises to the cell junction. The protein localises to the focal adhesion. In terms of biological role, scaffold protein that may play a role in cell adhesion, cell spreading and in the reorganization of the actin cytoskeleton. Plays a role in the regulation of cell proliferation. May act as a tumor suppressor. In Nomascus leucogenys (Northern white-cheeked gibbon), this protein is Testin (TES).